A 122-amino-acid polypeptide reads, in one-letter code: Histone H2B.2 (122 aa).

Over residues 1-10 the composition is skewed to low complexity; the sequence is MAPKKAPAAT. Positions 1–28 are disordered; the sequence is MAPKKAPAATTEKKVKKAPTTEKKNKKK. At Ala2 the chain carries N,N,N-trimethylalanine. Lys5 and Lys42 each carry N6-acetyllysine. Lys116 is covalently cross-linked (Glycyl lysine isopeptide (Lys-Gly) (interchain with G-Cter in ubiquitin)).

The protein belongs to the histone H2B family. The nucleosome is a histone octamer containing two molecules each of H2A, H2B, H3 and H4 assembled in one H3-H4 heterotetramer and two H2A-H2B heterodimers. The octamer wraps approximately 147 bp of DNA. Acetylation occurs almost exclusively in the MAC. Post-translationally, monoubiquitination to form H2BK115ub1 gives a specific tag for epigenetic transcriptional activation and is also prerequisite for H3K4me and H3K79me formation.

It localises to the nucleus. Its subcellular location is the chromosome. Core component of nucleosome. Nucleosomes wrap and compact DNA into chromatin, limiting DNA accessibility to the cellular machineries which require DNA as a template. Histones thereby play a central role in transcription regulation, DNA repair, DNA replication and chromosomal stability. DNA accessibility is regulated via a complex set of post-translational modifications of histones, also called histone code, and nucleosome remodeling. The sequence is that of Histone H2B.2 (HTB2) from Tetrahymena thermophila (strain SB210).